The primary structure comprises 316 residues: Acetyl-coenzyme A carboxylase carboxyl transferase subunit alpha (316 aa).

One can recognise a CoA carboxyltransferase C-terminal domain in the interval 39–293; the sequence is RLQDKSKALT…RGELLAQLKM (255 aa).

Belongs to the AccA family. In terms of assembly, acetyl-CoA carboxylase is a heterohexamer composed of biotin carboxyl carrier protein (AccB), biotin carboxylase (AccC) and two subunits each of ACCase subunit alpha (AccA) and ACCase subunit beta (AccD).

The protein localises to the cytoplasm. The enzyme catalyses N(6)-carboxybiotinyl-L-lysyl-[protein] + acetyl-CoA = N(6)-biotinyl-L-lysyl-[protein] + malonyl-CoA. Its pathway is lipid metabolism; malonyl-CoA biosynthesis; malonyl-CoA from acetyl-CoA: step 1/1. In terms of biological role, component of the acetyl coenzyme A carboxylase (ACC) complex. First, biotin carboxylase catalyzes the carboxylation of biotin on its carrier protein (BCCP) and then the CO(2) group is transferred by the carboxyltransferase to acetyl-CoA to form malonyl-CoA. This chain is Acetyl-coenzyme A carboxylase carboxyl transferase subunit alpha, found in Pseudomonas aeruginosa (strain UCBPP-PA14).